We begin with the raw amino-acid sequence, 389 residues long: Odorant receptor 85c (389 aa).

Topologically, residues 1–33 (MKFMKYAVFFYTSVGIEPYTIDSRSKKASLWSH) are cytoplasmic. A helical membrane pass occupies residues 34 to 54 (LLFWANVINLSVIVFGEILYL). The Extracellular portion of the chain corresponds to 55–66 (GVAYSDGKFIDA). The chain crosses the membrane as a helical span at residues 67–87 (VTVLSYIGFVIVGMSKMFFIW). Residues 88–130 (WKKTDLSDLVKELEHIYPNGKAEEEMYRLDRYLRSCSRISITY) lie on the Cytoplasmic side of the membrane. The helical transmembrane segment at 131–151 (ALLYSVLIWTFNLFSIMQFLV) threads the bilayer. At 152 to 199 (YEKLLKIRVVGQTLPYLMYFPWNWHENWTYYVLLFCQNFAGHTSASGQ) the chain is on the extracellular side. N178 is a glycosylation site (N-linked (GlcNAc...) asparagine). A helical membrane pass occupies residues 200-220 (ISTDLLLCAVATQVVMHFDYL). The Cytoplasmic segment spans residues 221–259 (ARVVEKQVLDRDWSENSRFLAKTVQYHQRILRLMDVLND). Residues 260–280 (IFGIPLLLNFMVSTFVICFVG) form a helical membrane-spanning segment. Residues 281–290 (FQMTVGVPPD) are Extracellular-facing. A helical transmembrane segment spans residues 291–311 (IMIKLFLFLFSSLSQVYLICH). Over 312-359 (YGQLIADASSSLSISAYKQNWQNADIRYRRALVFFIARPQRTTYLKAT) the chain is Cytoplasmic. A helical membrane pass occupies residues 360 to 380 (IFMNITRATMTDLLQVSYKFF). Residues 381-389 (ALLRTMYIK) lie on the Extracellular side of the membrane.

Belongs to the insect chemoreceptor superfamily. Heteromeric odorant receptor channel (TC 1.A.69) family. Or49a subfamily. As to quaternary structure, interacts with Orco. Complexes exist early in the endomembrane system in olfactory sensory neurons (OSNs), coupling these complexes to the conserved ciliary trafficking pathway.

The protein resides in the cell membrane. Its function is as follows. Odorant receptor which mediates acceptance or avoidance behavior, depending on its substrates. The odorant receptor repertoire encodes a large collection of odor stimuli that vary widely in identity, intensity, and duration. May form a complex with Orco to form odorant-sensing units, providing sensitive and prolonged odorant signaling and calcium permeability. The sequence is that of Odorant receptor 85c (Or85c) from Drosophila melanogaster (Fruit fly).